Reading from the N-terminus, the 434-residue chain is Probable glycine dehydrogenase (decarboxylating) subunit 1 (434 aa).

It belongs to the GcvP family. N-terminal subunit subfamily. In terms of assembly, the glycine cleavage system is composed of four proteins: P, T, L and H. In this organism, the P 'protein' is a heterodimer of two subunits.

It catalyses the reaction N(6)-[(R)-lipoyl]-L-lysyl-[glycine-cleavage complex H protein] + glycine + H(+) = N(6)-[(R)-S(8)-aminomethyldihydrolipoyl]-L-lysyl-[glycine-cleavage complex H protein] + CO2. Functionally, the glycine cleavage system catalyzes the degradation of glycine. The P protein binds the alpha-amino group of glycine through its pyridoxal phosphate cofactor; CO(2) is released and the remaining methylamine moiety is then transferred to the lipoamide cofactor of the H protein. The polypeptide is Probable glycine dehydrogenase (decarboxylating) subunit 1 (Thermoplasma volcanium (strain ATCC 51530 / DSM 4299 / JCM 9571 / NBRC 15438 / GSS1)).